Reading from the N-terminus, the 197-residue chain is Large ribosomal subunit protein bL25 (197 aa).

This sequence belongs to the bacterial ribosomal protein bL25 family. CTC subfamily. As to quaternary structure, part of the 50S ribosomal subunit; part of the 5S rRNA/L5/L18/L25 subcomplex. Contacts the 5S rRNA. Binds to the 5S rRNA independently of L5 and L18.

Its function is as follows. This is one of the proteins that binds to the 5S RNA in the ribosome where it forms part of the central protuberance. The chain is Large ribosomal subunit protein bL25 from Hydrogenobaculum sp. (strain Y04AAS1).